Here is a 147-residue protein sequence, read N- to C-terminus: Small ribosomal subunit protein uS12 (147 aa).

Belongs to the universal ribosomal protein uS12 family. As to quaternary structure, part of the 30S ribosomal subunit.

With S4 and S5 plays an important role in translational accuracy. Located at the interface of the 30S and 50S subunits. The protein is Small ribosomal subunit protein uS12 of Methanococcus maripaludis (strain C5 / ATCC BAA-1333).